We begin with the raw amino-acid sequence, 143 residues long: Cofilin/actin-depolymerizing factor homolog 2 (143 aa).

The 138-residue stretch at 4 to 141 folds into the ADF-H domain; that stretch reads GVKVSDECVY…FEDELRTIIL (138 aa).

Belongs to the actin-binding proteins ADF family. In terms of assembly, interacts with monomeric actin, does not bind to actin polymers.

It is found in the cytoplasm. The protein localises to the cytoskeleton. Its function is as follows. Not involved in actin polymerisation, instead functions to stimulate nucleotide exchange on monomeric actin and influence turnover of the small amount of cytosolic actin microfilaments. Essential for erythrocytic schizogony. This is Cofilin/actin-depolymerizing factor homolog 2 from Plasmodium falciparum (isolate 3D7).